The chain runs to 630 residues: Transposase B from transposon Tn554 (630 aa).

Positions 216 to 302 (TYFKQLVKRY…ILEGLFSTLL (87 aa)) constitute a Core-binding (CB) domain. The Tyr recombinase domain maps to 326 to 513 (AKPRFIDEFV…FDETLKNEFT (188 aa)). Residues Arg363, Lys391, His465, Arg468, and His491 contribute to the active site. Tyr500 serves as the catalytic O-(3'-phospho-DNA)-tyrosine intermediate.

This sequence belongs to the 'phage' integrase family.

Functionally, one of three proteins encoded by transposon Tn554 required for its transposition. The protein is Transposase B from transposon Tn554 (tnpB1) of Staphylococcus aureus (strain Mu50 / ATCC 700699).